A 185-amino-acid chain; its full sequence is Pro-adrenomedullin (185 aa).

The first 21 residues, 1–21 (MKLVSVALMYLGSLAFLGADT), serve as a signal peptide directing secretion. The residue at position 41 (R41) is an Arginine amide. The propeptide occupies 45–92 (ELRMSSSYPTGLADVKAGPAQTLIRPQDMKGASRSPEDSSPDAARIRV). Positions 60 to 87 (KAGPAQTLIRPQDMKGASRSPEDSSPDA) are disordered. C110 and C115 form a disulfide bridge. The tract at residues 133 to 185 (DNVAPRSKISPQGYGRRRRRSLPEAGPGRTLVSSKPQAHGAPAPPSGSAPHFL) is disordered. A Tyrosine amide modification is found at Y146. A propeptide spans 148 to 185 (RRRRRSLPEAGPGRTLVSSKPQAHGAPAPPSGSAPHFL) (preproAM C-terminal fragment).

The protein belongs to the adrenomedullin family. In terms of tissue distribution, highest levels found in pheochromocytoma and adrenal medulla. Also found in lung, ventricle and kidney tissues.

The protein resides in the secreted. In terms of biological role, adrenomedullin/ADM and proadrenomedullin N-20 terminal peptide/PAMP are peptide hormones that act as potent hypotensive and vasodilatator agents. Numerous actions have been reported most related to the physiologic control of fluid and electrolyte homeostasis. In the kidney, ADM is diuretic and natriuretic, and both ADM and PAMP inhibit aldosterone secretion by direct adrenal actions. In pituitary gland, both peptides at physiologically relevant doses inhibit basal ACTH secretion. Both peptides appear to act in brain and pituitary gland to facilitate the loss of plasma volume, actions which complement their hypotensive effects in blood vessels. Its function is as follows. ADM function is mediated by the CALCRL-RAMP2 and CALCRL-RAMP3 receptor complexes with ADM showing the highest potency for the CALCRL-RAMP2 complex. This is Pro-adrenomedullin from Homo sapiens (Human).